Here is a 608-residue protein sequence, read N- to C-terminus: Granule-bound starch synthase 1, chloroplastic/amyloplastic (608 aa).

The transit peptide at 1 to 76 directs the protein to the chloroplast; sequence MATITASHFV…EGGMAAGTIV (76 aa). K96 contributes to the ADP-alpha-D-glucose binding site.

The protein belongs to the glycosyltransferase 1 family. Bacterial/plant glycogen synthase subfamily.

The protein resides in the plastid. The protein localises to the chloroplast. It is found in the amyloplast. It carries out the reaction an NDP-alpha-D-glucose + [(1-&gt;4)-alpha-D-glucosyl](n) = [(1-&gt;4)-alpha-D-glucosyl](n+1) + a ribonucleoside 5'-diphosphate + H(+). Its pathway is glycan biosynthesis; starch biosynthesis. Functionally, required for the synthesis of amylose. The chain is Granule-bound starch synthase 1, chloroplastic/amyloplastic (WAXY) from Ipomoea batatas (Sweet potato).